A 135-amino-acid polypeptide reads, in one-letter code: Transcription antitermination protein NusB (135 aa).

The protein belongs to the NusB family.

Functionally, involved in transcription antitermination. Required for transcription of ribosomal RNA (rRNA) genes. Binds specifically to the boxA antiterminator sequence of the ribosomal RNA (rrn) operons. The polypeptide is Transcription antitermination protein NusB (Shewanella piezotolerans (strain WP3 / JCM 13877)).